The chain runs to 403 residues: S-adenosylmethionine synthase (403 aa).

Histidine 17 contacts ATP. Residue aspartate 19 coordinates Mg(2+). Residue glutamate 45 coordinates K(+). L-methionine is bound by residues glutamate 58 and glutamine 104. Residues 104–114 (QSPDIAQGVDT) form a flexible loop region. ATP is bound by residues 179–181 (DGK), 250–251 (KF), aspartate 259, 265–266 (RK), alanine 282, and lysine 286. L-methionine is bound at residue aspartate 259. An L-methionine-binding site is contributed by lysine 290.

The protein belongs to the AdoMet synthase family. As to quaternary structure, homotetramer; dimer of dimers. It depends on Mg(2+) as a cofactor. Requires K(+) as cofactor.

The protein resides in the cytoplasm. The catalysed reaction is L-methionine + ATP + H2O = S-adenosyl-L-methionine + phosphate + diphosphate. Its pathway is amino-acid biosynthesis; S-adenosyl-L-methionine biosynthesis; S-adenosyl-L-methionine from L-methionine: step 1/1. Functionally, catalyzes the formation of S-adenosylmethionine (AdoMet) from methionine and ATP. The overall synthetic reaction is composed of two sequential steps, AdoMet formation and the subsequent tripolyphosphate hydrolysis which occurs prior to release of AdoMet from the enzyme. This Mycolicibacterium paratuberculosis (strain ATCC BAA-968 / K-10) (Mycobacterium paratuberculosis) protein is S-adenosylmethionine synthase.